We begin with the raw amino-acid sequence, 371 residues long: Alanine racemase (371 aa).

K40 serves as the catalytic Proton acceptor; specific for D-alanine. K40 is subject to N6-(pyridoxal phosphate)lysine. A substrate-binding site is contributed by R136. Y263 acts as the Proton acceptor; specific for L-alanine in catalysis. M310 is a binding site for substrate.

It belongs to the alanine racemase family. Requires pyridoxal 5'-phosphate as cofactor.

It carries out the reaction L-alanine = D-alanine. Its pathway is amino-acid biosynthesis; D-alanine biosynthesis; D-alanine from L-alanine: step 1/1. Its function is as follows. Catalyzes the interconversion of L-alanine and D-alanine. May also act on other amino acids. The protein is Alanine racemase (alr) of Streptococcus mutans serotype c (strain ATCC 700610 / UA159).